Here is a 156-residue protein sequence, read N- to C-terminus: 6,7-dimethyl-8-ribityllumazine synthase (156 aa).

Residues phenylalanine 23, 57 to 59, and 81 to 83 contribute to the 5-amino-6-(D-ribitylamino)uracil site; these read AYE and AII. 86–87 lines the (2S)-2-hydroxy-3-oxobutyl phosphate pocket; that stretch reads GT. Histidine 89 functions as the Proton donor in the catalytic mechanism. Phenylalanine 114 serves as a coordination point for 5-amino-6-(D-ribitylamino)uracil. A (2S)-2-hydroxy-3-oxobutyl phosphate-binding site is contributed by arginine 128.

It belongs to the DMRL synthase family.

The enzyme catalyses (2S)-2-hydroxy-3-oxobutyl phosphate + 5-amino-6-(D-ribitylamino)uracil = 6,7-dimethyl-8-(1-D-ribityl)lumazine + phosphate + 2 H2O + H(+). It participates in cofactor biosynthesis; riboflavin biosynthesis; riboflavin from 2-hydroxy-3-oxobutyl phosphate and 5-amino-6-(D-ribitylamino)uracil: step 1/2. Functionally, catalyzes the formation of 6,7-dimethyl-8-ribityllumazine by condensation of 5-amino-6-(D-ribitylamino)uracil with 3,4-dihydroxy-2-butanone 4-phosphate. This is the penultimate step in the biosynthesis of riboflavin. The chain is 6,7-dimethyl-8-ribityllumazine synthase from Helicobacter pylori (strain P12).